The chain runs to 174 residues: Adenine phosphoribosyltransferase (174 aa).

This sequence belongs to the purine/pyrimidine phosphoribosyltransferase family. Homodimer.

The protein resides in the cytoplasm. The enzyme catalyses AMP + diphosphate = 5-phospho-alpha-D-ribose 1-diphosphate + adenine. Its pathway is purine metabolism; AMP biosynthesis via salvage pathway; AMP from adenine: step 1/1. Its function is as follows. Catalyzes a salvage reaction resulting in the formation of AMP, that is energically less costly than de novo synthesis. The protein is Adenine phosphoribosyltransferase of Dichelobacter nodosus (strain VCS1703A).